Consider the following 250-residue polypeptide: Alpha/beta hydrolase nvfD (250 aa).

Residues Asp198 and His226 each act as charge relay system in the active site.

Belongs to the AB hydrolase superfamily.

It participates in secondary metabolite biosynthesis; terpenoid biosynthesis. In terms of biological role, alpha/beta hydrolase; part of the gene cluster that mediates the biosynthesis of novofumigatonin, a heavily oxygenated meroterpenoid containing a unique orthoester moiety. The first step of the pathway is the synthesis of 3,5-dimethylorsellinic acid (DMOA) by the polyketide synthase nvfA via condensation of one acetyl-CoA starter unit with 3 malonyl-CoA units and 2 methylations. DMOA is then converted to farnesyl-DMOA by the farnesyltransferase nvfB. Epoxydation by FAD-dependent monooxygenase nvfK, followed by a protonation-initiated cyclization catalyzed by the terpene cyclase nvfL leads to the production of asnavolin H. The short chain dehydrogenase nvfC then as a 3-OH dehydrogenase of asnovolin H to yield chemesin D. There are two branches to synthesize asnovolin A from chemesin D. In one branch, chemesin D undergoes Baeyer-Villiger oxidation by nvfH, methylation by nvfJ, and enoyl reduction by the nvfM D enoylreductase that reduces the double bond between C-5'and C-6', to form respectively asnovolin I, asnovolin K, and asnovolin A. In the other branch, the methylation precedes the Baeyer-Villiger oxidation and the enoyl reduction to yield asnovolin A via the asnovolin J intermediate. Asnovolin A is further converted to fumigatonoid A by the Fe(II)/2-oxoglutarate-dependent dioxygenase nvfI that catalyzes an endoperoxidation reaction. The alpha/beta hydrolase nvfD then acts as an epimerase that converts fumigatonoid A to its C-5' epimer, which then undergoes spontaneous or nvfD-catalyzed lactonization. The following step utilizes the ketoreductase nvfG to produce fumigatonoid B. The dioxygenase nvfE further converts fumigatonoid B into fumigatonoid C. Finally the Fe(II)/2-oxoglutarate-dependent dioxygenase nvfF catalyzes two rounds of oxidation to transform fumigatonoid C into the end product, novofumigatonin A. This chain is Alpha/beta hydrolase nvfD, found in Aspergillus novofumigatus (strain IBT 16806).